The primary structure comprises 395 residues: Phosphopentomutase (395 aa).

Mn(2+) contacts are provided by aspartate 14, aspartate 286, histidine 291, aspartate 327, histidine 328, and histidine 339.

This sequence belongs to the phosphopentomutase family. Requires Mn(2+) as cofactor.

Its subcellular location is the cytoplasm. The enzyme catalyses 2-deoxy-alpha-D-ribose 1-phosphate = 2-deoxy-D-ribose 5-phosphate. It catalyses the reaction alpha-D-ribose 1-phosphate = D-ribose 5-phosphate. The protein operates within carbohydrate degradation; 2-deoxy-D-ribose 1-phosphate degradation; D-glyceraldehyde 3-phosphate and acetaldehyde from 2-deoxy-alpha-D-ribose 1-phosphate: step 1/2. Isomerase that catalyzes the conversion of deoxy-ribose 1-phosphate (dRib-1-P) and ribose 1-phosphate (Rib-1-P) to deoxy-ribose 5-phosphate (dRib-5-P) and ribose 5-phosphate (Rib-5-P), respectively. The chain is Phosphopentomutase from Staphylococcus haemolyticus (strain JCSC1435).